We begin with the raw amino-acid sequence, 566 residues long: Phosphatidylinositol 4-kinase gamma 4 (566 aa).

Ubiquitin-like domains follow at residues 34 to 111 (TIMI…SDLQ) and 112 to 190 (VLDV…AKVR). Positions 250 to 263 (DGLKSGNSPVRSSE) are enriched in polar residues. The disordered stretch occupies residues 250 to 272 (DGLKSGNSPVRSSEGTGGAYFMQ). Positions 255 to 547 (GNSPVRSSEG…AVLPGTSEAA (293 aa)) constitute a PI3K/PI4K catalytic domain. The tract at residues 261-267 (SSEGTGG) is G-loop. Residues 262 to 268 (SEGTGGA), Lys284, and 374 to 377 (QMFT) contribute to the ATP site. Positions 407 to 415 (ANADRHGGN) are catalytic loop. An activation loop region spans residues 430 to 456 (PIDHGYCLPESFEDCTFEWLYWPQARK). ATP is bound at residue Asp432.

The protein belongs to the PI3/PI4-kinase family. Type II PI4K subfamily. Interacts with RPN10, UFD1 and CDC48 in vitro. Post-translationally, autophosphorylated.

It is found in the membrane. The catalysed reaction is a 1,2-diacyl-sn-glycero-3-phospho-(1D-myo-inositol) + ATP = a 1,2-diacyl-sn-glycero-3-phospho-(1D-myo-inositol 4-phosphate) + ADP + H(+). The phosphorylation of phosphatidylinositol (PI) to PI4P is the first committed step in the generation of phosphatidylinositol 4,5-bisphosphate (PIP2), a precursor of the second messenger inositol 1,4,5-trisphosphate (InsP3). Undergoes autophosphorylation and phosphorylates serine/threonine residues of protein substrates. Phosphorylates RPN10 and UFD1 in vitro. The polypeptide is Phosphatidylinositol 4-kinase gamma 4 (Arabidopsis thaliana (Mouse-ear cress)).